A 185-amino-acid polypeptide reads, in one-letter code: Ribosome-recycling factor (185 aa).

Belongs to the RRF family.

The protein resides in the cytoplasm. Its function is as follows. Responsible for the release of ribosomes from messenger RNA at the termination of protein biosynthesis. May increase the efficiency of translation by recycling ribosomes from one round of translation to another. This Citrifermentans bemidjiense (strain ATCC BAA-1014 / DSM 16622 / JCM 12645 / Bem) (Geobacter bemidjiensis) protein is Ribosome-recycling factor.